A 380-amino-acid chain; its full sequence is Histidinol-phosphate aminotransferase 1 (380 aa).

Residue K235 is modified to N6-(pyridoxal phosphate)lysine.

Belongs to the class-II pyridoxal-phosphate-dependent aminotransferase family. Histidinol-phosphate aminotransferase subfamily. In terms of assembly, homodimer. The cofactor is pyridoxal 5'-phosphate.

The enzyme catalyses L-histidinol phosphate + 2-oxoglutarate = 3-(imidazol-4-yl)-2-oxopropyl phosphate + L-glutamate. Its pathway is amino-acid biosynthesis; L-histidine biosynthesis; L-histidine from 5-phospho-alpha-D-ribose 1-diphosphate: step 7/9. This chain is Histidinol-phosphate aminotransferase 1, found in Psychrobacter arcticus (strain DSM 17307 / VKM B-2377 / 273-4).